Here is a 176-residue protein sequence, read N- to C-terminus: NAD(P)H-quinone oxidoreductase subunit 6, chloroplastic (176 aa).

5 helical membrane-spanning segments follow: residues 10–30, 32–52, 61–81, 92–112, and 152–172; these read FLLV…VLLP, PIYS…FYIL, AQLL…VMFM, LWTV…ISLI, and FFLP…GAIA.

Belongs to the complex I subunit 6 family. In terms of assembly, NDH is composed of at least 16 different subunits, 5 of which are encoded in the nucleus.

The protein localises to the plastid. It localises to the chloroplast thylakoid membrane. The enzyme catalyses a plastoquinone + NADH + (n+1) H(+)(in) = a plastoquinol + NAD(+) + n H(+)(out). It carries out the reaction a plastoquinone + NADPH + (n+1) H(+)(in) = a plastoquinol + NADP(+) + n H(+)(out). In terms of biological role, NDH shuttles electrons from NAD(P)H:plastoquinone, via FMN and iron-sulfur (Fe-S) centers, to quinones in the photosynthetic chain and possibly in a chloroplast respiratory chain. The immediate electron acceptor for the enzyme in this species is believed to be plastoquinone. Couples the redox reaction to proton translocation, and thus conserves the redox energy in a proton gradient. The sequence is that of NAD(P)H-quinone oxidoreductase subunit 6, chloroplastic (ndhG) from Solanum bulbocastanum (Wild potato).